The primary structure comprises 360 residues: DNA replication and repair protein RecF (360 aa).

30–37 (GQNGSGKT) is an ATP binding site.

This sequence belongs to the RecF family.

Its subcellular location is the cytoplasm. The RecF protein is involved in DNA metabolism; it is required for DNA replication and normal SOS inducibility. RecF binds preferentially to single-stranded, linear DNA. It also seems to bind ATP. The chain is DNA replication and repair protein RecF from Shewanella putrefaciens (strain CN-32 / ATCC BAA-453).